We begin with the raw amino-acid sequence, 227 residues long: MITQKGKEHLAKDKQNIYLRILSGIVLVPLFVIAILWFKPLFYILMILVGMGMLSEWYNMTYSSIPYLLIGLIIIPIPISLLTFLSMEDTNRWLIMLYFCIIWSVDSFAMIGGKTFKGAKLAPKISPKKTWSGLVTGVLSAGLVAVLASFIPNFHIENYYFSNKIYLFIISCILALIAQSSDLFISYLKRKFNIKDSGHIIPGHGGVLDRFDSIILTAPVLFFISIL.

The next 6 helical transmembrane spans lie at 31–51, 65–85, 93–113, 131–151, 165–185, and 206–226; these read FVIAILWFKPLFYILMILVGM, IPYLLIGLIIIPIPISLLTFL, WLIMLYFCIIWSVDSFAMIGG, WSGLVTGVLSAGLVAVLASFI, IYLFIISCILALIAQSSDLFI, and GVLDRFDSIILTAPVLFFISI.

It belongs to the CDS family.

The protein resides in the cell membrane. The enzyme catalyses a 1,2-diacyl-sn-glycero-3-phosphate + CTP + H(+) = a CDP-1,2-diacyl-sn-glycerol + diphosphate. It participates in phospholipid metabolism; CDP-diacylglycerol biosynthesis; CDP-diacylglycerol from sn-glycerol 3-phosphate: step 3/3. This is Phosphatidate cytidylyltransferase (cdsA) from Rickettsia felis (strain ATCC VR-1525 / URRWXCal2) (Rickettsia azadi).